Reading from the N-terminus, the 271-residue chain is 5-deoxy-glucuronate isomerase (271 aa).

The protein belongs to the isomerase IolB family.

It carries out the reaction 5-deoxy-D-glucuronate = 5-dehydro-2-deoxy-D-gluconate. It functions in the pathway polyol metabolism; myo-inositol degradation into acetyl-CoA; acetyl-CoA from myo-inositol: step 4/7. Involved in the isomerization of 5-deoxy-glucuronate (5DG) to 5-dehydro-2-deoxy-D-gluconate (DKG or 2-deoxy-5-keto-D-gluconate). In Bacillus velezensis (strain DSM 23117 / BGSC 10A6 / LMG 26770 / FZB42) (Bacillus amyloliquefaciens subsp. plantarum), this protein is 5-deoxy-glucuronate isomerase.